A 178-amino-acid polypeptide reads, in one-letter code: Alkyl hydroperoxide reductase AhpD (178 aa).

The Proton donor role is filled by cysteine 130. A disulfide bridge connects residues cysteine 130 and cysteine 133. The active-site Cysteine sulfenic acid (-SOH) intermediate is cysteine 133.

Belongs to the AhpD family. In terms of assembly, homotrimer.

The catalysed reaction is N(6)-[(R)-dihydrolipoyl]-L-lysyl-[lipoyl-carrier protein] + a hydroperoxide = N(6)-[(R)-lipoyl]-L-lysyl-[lipoyl-carrier protein] + an alcohol + H2O. Its function is as follows. Antioxidant protein with alkyl hydroperoxidase activity. Required for the reduction of the AhpC active site cysteine residues and for the regeneration of the AhpC enzyme activity. In Mycobacterium marinum (strain ATCC BAA-535 / M), this protein is Alkyl hydroperoxide reductase AhpD.